Here is a 602-residue protein sequence, read N- to C-terminus: Pentatricopeptide repeat-containing protein At3g04760, chloroplastic (602 aa).

A chloroplast-targeting transit peptide spans 1 to 78 (MTPLSSELVG…TDATLPTERR (78 aa)). A compositionally biased stretch (polar residues) spans 42–64 (FSNSNPNNDNGRSFSSSGARNLQ). A disordered region spans residues 42–85 (FSNSNPNNDNGRSFSSSGARNLQTTTTTDATLPTERRQQHSQSL). Over residues 65–74 (TTTTTDATLP) the composition is skewed to low complexity. 14 PPR repeats span residues 88 to 122 (RDTQ…GYNP), 123 to 153 (DVIL…LEKF), 157 to 191 (DVFA…DFSP), 192 to 226 (DTVT…NCQP), 227 to 261 (TVIT…GLKP), 262 to 296 (DMFT…GCEP), 297 to 331 (DVIS…KCDP), 332 to 366 (NVVT…GLTP), 367 to 401 (DAYS…GCLP), 402 to 436 (DIVN…GCSP), 437 to 471 (NSSS…GIDP), 472 to 506 (DEIT…EFHP), 507 to 541 (SVVT…GCRP), and 542 to 576 (NETT…DAIS).

This sequence belongs to the PPR family. P subfamily.

The protein localises to the plastid. The protein resides in the chloroplast. The polypeptide is Pentatricopeptide repeat-containing protein At3g04760, chloroplastic (Arabidopsis thaliana (Mouse-ear cress)).